The following is a 444-amino-acid chain: tRNA modification GTPase MnmE (444 aa).

3 residues coordinate (6S)-5-formyl-5,6,7,8-tetrahydrofolate: Arg22, Glu79, and Arg118. One can recognise a TrmE-type G domain in the interval 214–368 (GMQVVLAGPP…LRDHLKSVMG (155 aa)). Position 224 (Asn224) interacts with K(+). GTP contacts are provided by residues 224 to 229 (NAGKSS), 243 to 249 (TEVPGTT), and 268 to 271 (DTAG). Ser228 contacts Mg(2+). Thr243, Val245, and Thr248 together coordinate K(+). Residue Thr249 coordinates Mg(2+). Lys444 contacts (6S)-5-formyl-5,6,7,8-tetrahydrofolate.

The protein belongs to the TRAFAC class TrmE-Era-EngA-EngB-Septin-like GTPase superfamily. TrmE GTPase family. In terms of assembly, homodimer. Heterotetramer of two MnmE and two MnmG subunits. K(+) serves as cofactor.

The protein resides in the cytoplasm. Its function is as follows. Exhibits a very high intrinsic GTPase hydrolysis rate. Involved in the addition of a carboxymethylaminomethyl (cmnm) group at the wobble position (U34) of certain tRNAs, forming tRNA-cmnm(5)s(2)U34. The protein is tRNA modification GTPase MnmE of Alkalilimnicola ehrlichii (strain ATCC BAA-1101 / DSM 17681 / MLHE-1).